A 104-amino-acid chain; its full sequence is Small ribosomal subunit protein uS10 (104 aa).

The protein belongs to the universal ribosomal protein uS10 family. In terms of assembly, part of the 30S ribosomal subunit.

Its function is as follows. Involved in the binding of tRNA to the ribosomes. This chain is Small ribosomal subunit protein uS10, found in Buchnera aphidicola subsp. Baizongia pistaciae (strain Bp).